Reading from the N-terminus, the 379-residue chain is RING finger protein 215 (379 aa).

Disordered stretches follow at residues 1-21 (MGSA…PPSP) and 44-63 (AADG…RSVR). Residues 1 to 24 (MGSADRPALRSPSLPPPPPSPPSP) are Cytoplasmic-facing. The helical transmembrane segment at 25 to 45 (LLLLLPLLPLWLGLMGPGAAA) threads the bilayer. The Extracellular portion of the chain corresponds to 46–252 (DGSEPATGEG…GGAQAQEQKP (207 aa)). N-linked (GlcNAc...) asparagine glycosylation is present at Asn188. A helical membrane pass occupies residues 253 to 273 (LQQLWNAILLVAMLLCTGLVV). At 274–379 (QAQRQASRQN…NVLGNHYSDD (106 aa)) the chain is on the cytoplasmic side. Residues 327–368 (CAVCLDYFCNKQWLRVLPCKHEFHRDCVDPWLMLQQTCPLCK) form an RING-type; atypical zinc finger.

It localises to the membrane. The protein is RING finger protein 215 (Rnf215) of Mus musculus (Mouse).